A 97-amino-acid chain; its full sequence is Aspartyl/glutamyl-tRNA(Asn/Gln) amidotransferase subunit C (97 aa).

The disordered stretch occupies residues 68 to 97 (ETGFTQEEALSNAPQQSQGQFRTPKVVESA). The segment covering 70 to 88 (GFTQEEALSNAPQQSQGQF) has biased composition (polar residues).

It belongs to the GatC family. As to quaternary structure, heterotrimer of A, B and C subunits.

The catalysed reaction is L-glutamyl-tRNA(Gln) + L-glutamine + ATP + H2O = L-glutaminyl-tRNA(Gln) + L-glutamate + ADP + phosphate + H(+). It catalyses the reaction L-aspartyl-tRNA(Asn) + L-glutamine + ATP + H2O = L-asparaginyl-tRNA(Asn) + L-glutamate + ADP + phosphate + 2 H(+). Its function is as follows. Allows the formation of correctly charged Asn-tRNA(Asn) or Gln-tRNA(Gln) through the transamidation of misacylated Asp-tRNA(Asn) or Glu-tRNA(Gln) in organisms which lack either or both of asparaginyl-tRNA or glutaminyl-tRNA synthetases. The reaction takes place in the presence of glutamine and ATP through an activated phospho-Asp-tRNA(Asn) or phospho-Glu-tRNA(Gln). The polypeptide is Aspartyl/glutamyl-tRNA(Asn/Gln) amidotransferase subunit C (Akkermansia muciniphila (strain ATCC BAA-835 / DSM 22959 / JCM 33894 / BCRC 81048 / CCUG 64013 / CIP 107961 / Muc)).